The sequence spans 229 residues: Putative N-acetylmannosamine-6-phosphate 2-epimerase (229 aa).

The protein belongs to the NanE family.

The enzyme catalyses an N-acyl-D-glucosamine 6-phosphate = an N-acyl-D-mannosamine 6-phosphate. It functions in the pathway amino-sugar metabolism; N-acetylneuraminate degradation; D-fructose 6-phosphate from N-acetylneuraminate: step 3/5. Functionally, converts N-acetylmannosamine-6-phosphate (ManNAc-6-P) to N-acetylglucosamine-6-phosphate (GlcNAc-6-P). This Salmonella agona (strain SL483) protein is Putative N-acetylmannosamine-6-phosphate 2-epimerase.